We begin with the raw amino-acid sequence, 464 residues long: Glutamate--tRNA ligase 2 (464 aa).

The 'HIGH' region motif lies at 11–21; it reads PSPTGFLHIGS. Residues 240–244 carry the 'KMSKS' region motif; sequence KLSKR. K243 serves as a coordination point for ATP.

Belongs to the class-I aminoacyl-tRNA synthetase family. Glutamate--tRNA ligase type 1 subfamily. As to quaternary structure, monomer.

It localises to the cytoplasm. It catalyses the reaction tRNA(Glu) + L-glutamate + ATP = L-glutamyl-tRNA(Glu) + AMP + diphosphate. In terms of biological role, catalyzes the attachment of glutamate to tRNA(Glu) in a two-step reaction: glutamate is first activated by ATP to form Glu-AMP and then transferred to the acceptor end of tRNA(Glu). This is Glutamate--tRNA ligase 2 from Rickettsia bellii (strain OSU 85-389).